A 724-amino-acid chain; its full sequence is Protein BCH1 (724 aa).

The span at 51 to 65 (TTATASANDNGATSN) shows a compositional bias: low complexity. A disordered region spans residues 51–71 (TTATASANDNGATSNINGQDP). The segment at 711–724 (LNFLKNFTNDTFDN) is CHS5-binding.

Belongs to the CHAPS family. In terms of assembly, component of the CHS5/6 complex composed of the 4 CHAPS proteins BCH1, BCH2, BUD7, and CHS6 as well as at least CHS5 and GTP-bound ARF1. The complex interacts with the cargo protein CHS3.

The protein resides in the golgi apparatus. It localises to the trans-Golgi network membrane. Member of the CHS5-ARF1P-binding proteins (CHAPS) which mediates export of specific cargo proteins, including chitin synthase CHS3. This chain is Protein BCH1 (BCH1), found in Saccharomyces cerevisiae (strain ATCC 204508 / S288c) (Baker's yeast).